Consider the following 448-residue polypeptide: Thymidine phosphorylase (448 aa).

Belongs to the thymidine/pyrimidine-nucleoside phosphorylase family. Homodimer.

It catalyses the reaction thymidine + phosphate = 2-deoxy-alpha-D-ribose 1-phosphate + thymine. It participates in pyrimidine metabolism; dTMP biosynthesis via salvage pathway; dTMP from thymine: step 1/2. Functionally, the enzymes which catalyze the reversible phosphorolysis of pyrimidine nucleosides are involved in the degradation of these compounds and in their utilization as carbon and energy sources, or in the rescue of pyrimidine bases for nucleotide synthesis. In Vibrio cholerae serotype O1 (strain ATCC 39315 / El Tor Inaba N16961), this protein is Thymidine phosphorylase.